Here is a 240-residue protein sequence, read N- to C-terminus: Mitochondrial transcription rescue factor 1 (240 aa).

The N-terminal 84 residues, 1-84, are a transit peptide targeting the mitochondrion; it reads MAMASVKLLA…ECIFPFSVRL (84 aa). Residues 95 to 127 are disordered; that stretch reads KKSLQKVDEEDSDEESHHDEMSEQEEELEDDPT. Phosphoserine is present on residues Ser-106 and Ser-116. The span at 116-126 shows a compositional bias: acidic residues; sequence SEQEEELEDDP. The S4 RNA-binding domain occupies 142-217; sequence FRYDVVLKTG…LKKVFEEKTE (76 aa).

Monomer. Interacts with POLRMT. Interacts (via S4 domain) with MTRFR (via C-terminus). Associates with mitoribosomal S39 large subunit, peptidyl tRNA and nascent chain.

The protein resides in the mitochondrion matrix. Its function is as follows. Mitochondrial RNA-binding protein involved in mitochondrial transcription regulation. Functions as a protective factor to maintain proper mitochondrial RNA level during stress. Acts at the transcription level and its protective function depends on its RNA binding ability. Part of a mitoribosome-associated quality control pathway that prevents aberrant translation by responding to interruptions during elongation. As heterodimer with MTRF, ejects the unfinished nascent chain and peptidyl transfer RNA (tRNA), respectively, from stalled ribosomes. Recruitment of mitoribosome biogenesis factors to these quality control intermediates suggests additional roles for MTRES1 and MTRF during mitoribosome rescue. This is Mitochondrial transcription rescue factor 1 from Homo sapiens (Human).